The sequence spans 230 residues: MNLNLNSIFGQFSPDLVLFIPMTLTAVFLNLSWLSISNPSNWLPSRANLLILSFYQEVLKILFQQTNPNTAPWVSAFTAIFILIFSINVLGLLPYAFTSTSHISLTYSIGVPLWMSVNILGFYLAFNSRLGHLVPQGTPSYLIPFMVIIETISLFAQPIALGLRLAANLTAGHLLIFLLSTAIWTLSSSPSIASITLLIFFFLFLLEIGVACIQAYVFTALVNFYLSQNL.

Transmembrane regions (helical) follow at residues 16-36 (LVLFIPMTLTAVFLNLSWLSI), 73-93 (WVSAFTAIFILIFSINVLGLL), 106-126 (TYSIGVPLWMSVNILGFYLAF), 142-162 (LIPFMVIIETISLFAQPIALG), 165-185 (LAANLTAGHLLIFLLSTAIWT), and 192-212 (IASITLLIFFFLFLLEIGVAC).

This sequence belongs to the ATPase A chain family. In terms of assembly, F-type ATPases have 2 components, CF(1) - the catalytic core - and CF(0) - the membrane proton channel. CF(1) has five subunits: alpha(3), beta(3), gamma(1), delta(1), epsilon(1). CF(0) has three main subunits: a, b and c.

The protein localises to the mitochondrion inner membrane. Functionally, mitochondrial membrane ATP synthase (F(1)F(0) ATP synthase or Complex V) produces ATP from ADP in the presence of a proton gradient across the membrane which is generated by electron transport complexes of the respiratory chain. F-type ATPases consist of two structural domains, F(1) - containing the extramembraneous catalytic core and F(0) - containing the membrane proton channel, linked together by a central stalk and a peripheral stalk. During catalysis, ATP synthesis in the catalytic domain of F(1) is coupled via a rotary mechanism of the central stalk subunits to proton translocation. Key component of the proton channel; it may play a direct role in the translocation of protons across the membrane. This is ATP synthase subunit a (ATP6) from Patiria pectinifera (Starfish).